Reading from the N-terminus, the 136-residue chain is Large ribosomal subunit protein uL16 (136 aa).

It belongs to the universal ribosomal protein uL16 family. Part of the 50S ribosomal subunit.

Binds 23S rRNA and is also seen to make contacts with the A and possibly P site tRNAs. In Haemophilus influenzae (strain 86-028NP), this protein is Large ribosomal subunit protein uL16.